The chain runs to 500 residues: Probable malate:quinone oxidoreductase (500 aa).

Belongs to the MQO family. Requires FAD as cofactor.

It catalyses the reaction (S)-malate + a quinone = a quinol + oxaloacetate. It participates in carbohydrate metabolism; tricarboxylic acid cycle; oxaloacetate from (S)-malate (quinone route): step 1/1. The chain is Probable malate:quinone oxidoreductase from Prochlorococcus marinus (strain MIT 9211).